Here is a 463-residue protein sequence, read N- to C-terminus: mRNA-capping enzyme subunit alpha (463 aa).

The N6-GMP-lysine intermediate role is filled by Lys-66. Positions 404 to 463 are disordered; that stretch reads WEERKSKKRTHSSISGPMLPPVAETKAPREATQSRYIDDEDWSDEADDDDEDSLKRARIE. Residues 441–455 show a composition bias toward acidic residues; sequence DDEDWSDEADDDDED.

The protein belongs to the eukaryotic GTase family. In terms of assembly, heterodimer. The mRNA-capping enzyme is composed of two separate chains alpha and beta, respectively a mRNA guanylyltransferase and an mRNA 5'-triphosphate monophosphatase.

The protein resides in the nucleus. The catalysed reaction is a 5'-end diphospho-ribonucleoside in mRNA + GTP + H(+) = a 5'-end (5'-triphosphoguanosine)-ribonucleoside in mRNA + diphosphate. Second step of mRNA capping. Transfer of the GMP moiety of GTP to the 5'-end of RNA via an enzyme-GMP covalent reaction intermediate. The polypeptide is mRNA-capping enzyme subunit alpha (CEG1) (Eremothecium gossypii (strain ATCC 10895 / CBS 109.51 / FGSC 9923 / NRRL Y-1056) (Yeast)).